A 440-amino-acid polypeptide reads, in one-letter code: UDP-N-acetylmuramoylalanine--D-glutamate ligase (440 aa).

Position 113-119 (113-119 (GTNGKST)) interacts with ATP.

Belongs to the MurCDEF family.

The protein resides in the cytoplasm. It catalyses the reaction UDP-N-acetyl-alpha-D-muramoyl-L-alanine + D-glutamate + ATP = UDP-N-acetyl-alpha-D-muramoyl-L-alanyl-D-glutamate + ADP + phosphate + H(+). Its pathway is cell wall biogenesis; peptidoglycan biosynthesis. Functionally, cell wall formation. Catalyzes the addition of glutamate to the nucleotide precursor UDP-N-acetylmuramoyl-L-alanine (UMA). The sequence is that of UDP-N-acetylmuramoylalanine--D-glutamate ligase (murD) from Buchnera aphidicola subsp. Schizaphis graminum (strain Sg).